We begin with the raw amino-acid sequence, 289 residues long: ATP synthase gamma chain (289 aa).

It belongs to the ATPase gamma chain family. F-type ATPases have 2 components, CF(1) - the catalytic core - and CF(0) - the membrane proton channel. CF(1) has five subunits: alpha(3), beta(3), gamma(1), delta(1), epsilon(1). CF(0) has three main subunits: a, b and c.

It is found in the cell inner membrane. Its function is as follows. Produces ATP from ADP in the presence of a proton gradient across the membrane. The gamma chain is believed to be important in regulating ATPase activity and the flow of protons through the CF(0) complex. In Haemophilus influenzae (strain PittGG), this protein is ATP synthase gamma chain.